We begin with the raw amino-acid sequence, 506 residues long: Ribose import ATP-binding protein RbsA 2 (506 aa).

2 ABC transporter domains span residues 7 to 242 and 250 to 497; these read LEMR…VGRP and ERDI…TGVN. 39–46 contacts ATP; it reads GENGAGKS.

Belongs to the ABC transporter superfamily. Ribose importer (TC 3.A.1.2.1) family. As to quaternary structure, the complex is composed of an ATP-binding protein (RbsA), two transmembrane proteins (RbsC) and a solute-binding protein (RbsB).

Its subcellular location is the cell inner membrane. It catalyses the reaction D-ribose(out) + ATP + H2O = D-ribose(in) + ADP + phosphate + H(+). Part of the ABC transporter complex RbsABC involved in ribose import. Responsible for energy coupling to the transport system. The chain is Ribose import ATP-binding protein RbsA 2 from Escherichia coli O157:H7.